A 314-amino-acid chain; its full sequence is Homeobox protein knotted-1-like 3 (314 aa).

Residues 218–238 (ELKIELKQGFKSRIEDVREEI) enclose the ELK domain. A DNA-binding region (homeobox; TALE-type) is located at residues 239–302 (LRKRRAGKLP…NQRKRNWHNN (64 aa)).

This sequence belongs to the TALE/KNOX homeobox family. As to expression, isoform 1 is expressed in roots and flowers, and at lower levels in leaf blades and leaf sheaths. Isoform 2 is expressed in roots and flowers.

Its subcellular location is the nucleus. In Oryza sativa subsp. japonica (Rice), this protein is Homeobox protein knotted-1-like 3 (HOS66).